A 2256-amino-acid chain; its full sequence is Death-inducer obliterator 1 (2256 aa).

Methionine 1 carries the N-acetylmethionine modification. The segment covering 1-25 has biased composition (basic and acidic residues); the sequence is MDDKGHLSNEEAPKAIKPTSKEFRK. The segment at 1-256 is disordered; it reads MDDKGHLSNE…NPREAGKPKP (256 aa). 2 stretches are compositionally biased toward polar residues: residues 48-59 and 96-119; these read SEQQPQQHNLSL and EPTSSTVTDVETASEGSVESSSEI. Residues serine 58 and serine 112 each carry the phosphoserine modification. Positions 128–142 are enriched in basic and acidic residues; that stretch reads LGKEHPASSEKAKGG. Residues 143-153 show a composition bias toward acidic residues; that stretch reads EEEEDTSDSDS. Threonine 148 is modified (phosphothreonine). Serine 149 and serine 151 each carry phosphoserine. 2 consecutive short sequence motifs (nuclear localization signal) follow at residues 162 to 170 and 182 to 190; these read QNRLRRKRE and QNRLRKKRR. The segment covering 169-178 has biased composition (basic and acidic residues); it reads REQEPVERSL. Basic and acidic residues-rich tracts occupy residues 206–216 and 246–256; these read EQDRPLCKQEP and ENPREAGKPKP. The PHD-type zinc-finger motif lies at 265-319; sequence ALYCICRQPHNNRFMICCDRCEEWFHGDCVGISEARGRLLERNGEDYICPNCTIL. Disordered stretches follow at residues 481 to 535, 598 to 624, 641 to 668, 778 to 822, 856 to 970, 1011 to 1039, and 1197 to 1218; these read LASR…DDRR, RPWPSATLSGTSARQAGPTPMTAASKK, ANVPAASPAPGRLGPVSPAPSQPNSQIR, SRTK…PEKS, QVPS…TALS, AKPSSSPDPRYLSVPPSPSISESRSPPEG, and PSSAGELDKTDEKRTRLQQEEL. Residues 495-506 are compositionally biased toward polar residues; the sequence is ESSTPSWASDHN. Residue serine 522 is modified to Phosphoserine. Residues 667–787 form the TFIIS central domain; that stretch reads IRQNIRRSLK…SRTKLLNESK (121 aa). Residues 778–788 show a composition bias toward basic and acidic residues; the sequence is SRTKLLNESKK. The span at 797-812 shows a compositional bias: acidic residues; it reads PDMEDSPPVSDSEEQQ. Serine 802 and serine 806 each carry phosphoserine. 2 stretches are compositionally biased toward basic and acidic residues: residues 875–886 and 921–935; these read SKKEDFKPRHDS and QERKCFPESPGDSHP. Residue lysine 876 forms a Glycyl lysine isopeptide (Lys-Gly) (interchain with G-Cter in SUMO2) linkage. Serine 886 is subject to Phosphoserine. Over residues 937-962 the composition is skewed to low complexity; it reads PSSLGGLSPSSASGGSGVVTTVTMSG. Phosphoserine occurs at positions 1016, 1027, and 1035. The span at 1202–1215 shows a compositional bias: basic and acidic residues; it reads ELDKTDEKRTRLQQ. A Phosphotyrosine modification is found at tyrosine 1239. The interval 1245–1288 is disordered; sequence DTAATSTTPPGSPPPPPPLPEPPVLKILSSLKPGSTSTVTAPTT. Phosphothreonine is present on threonine 1252. Pro residues predominate over residues 1254-1267; it reads PGSPPPPPPLPEPP. A Phosphoserine modification is found at serine 1256. Residues 1279 to 1288 show a composition bias toward low complexity; that stretch reads STSTVTAPTT. Position 1307 is a phosphoserine (serine 1307). 4 disordered regions span residues 1320 to 1347, 1362 to 1421, 1509 to 1609, and 1630 to 2256; these read KKSFEPSGKESVGSTLSPHQDSKAKGED, FGQF…VAYD, SDAL…EAKE, and QKCE…AAQA. Residues 1371 to 1387 show a composition bias toward acidic residues; sequence LEEEEEDDRPYDPEEEY. The residue at position 1514 (serine 1514) is a Phosphoserine. The span at 1526–1546 shows a compositional bias: polar residues; the sequence is LFSQEQQAPDPSQGAPNTNHN. The span at 1547–1557 shows a compositional bias: basic and acidic residues; the sequence is LDSRQSRDPRQ. The span at 1649–1666 shows a compositional bias: low complexity; it reads PTAGDGAARPAPPRRVLL. A compositionally biased stretch (pro residues) spans 1667-1679; the sequence is PTPPSTTFPPSFP. Residues 1699–1712 show a composition bias toward polar residues; the sequence is TFMSQETSLGSSQY. The residue at position 1726 (serine 1726) is a Phosphoserine. The segment covering 1783–1792 has biased composition (pro residues); it reads FPGPRGPVPP. Residue arginine 1848 is modified to Omega-N-methylarginine. Over residues 1855–1869 the composition is skewed to basic and acidic residues; the sequence is FEDRKDPHGEKREFQ. An asymmetric dimethylarginine mark is found at arginine 1904, arginine 1905, arginine 1988, arginine 1993, arginine 2004, arginine 2019, and arginine 2035. Basic and acidic residues-rich tracts occupy residues 2081 to 2113 and 2123 to 2246; these read EFREGKGHEYRSPAFEGRQRERFEAGSKEKPLD and RQGR…EART.

Interacts specifically (via PHD-type zinc finger) with histone H3 that is trimethylated at 'Lys-4' (H3K4me3), histone phosphorylation at 'Thr-3' or 'Thr-6' disrupts this binding and promotes translocation of DIDO1 from chromatin to the mitotic spindle during mitosis. As to expression, ubiquitous. Expressed at intermediate levels.

The protein resides in the cytoplasm. It localises to the nucleus. It is found in the cytoskeleton. Its subcellular location is the spindle. Its function is as follows. Required for early embryonic stem cell development. Putative transcription factor, weakly pro-apoptotic when overexpressed. In Mus musculus (Mouse), this protein is Death-inducer obliterator 1 (Dido1).